The sequence spans 387 residues: Putative ankyrin repeat protein RBE_0984 (387 aa).

ANK repeat units lie at residues 50 to 79, 88 to 119, 123 to 154, 159 to 188, and 210 to 239; these read YGNT…DKDI, HRET…AINV, RKHT…VINV, HKDS…KENI, and VCKM…LKGE. Coiled-coil stretches lie at residues 251-278 and 311-352; these read FEDI…KKCE and SISA…ALEK.

This is Putative ankyrin repeat protein RBE_0984 from Rickettsia bellii (strain RML369-C).